A 151-amino-acid polypeptide reads, in one-letter code: Large ribosomal subunit protein uL15 (151 aa).

It belongs to the universal ribosomal protein uL15 family. As to quaternary structure, part of the 50S ribosomal subunit.

Its function is as follows. Binds to the 23S rRNA. This chain is Large ribosomal subunit protein uL15, found in Hyperthermus butylicus (strain DSM 5456 / JCM 9403 / PLM1-5).